Reading from the N-terminus, the 414-residue chain is Isocitrate dehydrogenase [NADP] cytoplasmic (414 aa).

Ser2 is subject to N-acetylserine. Tyr42 carries the phosphotyrosine modification. 75-77 (TIT) provides a ligand contact to NADP(+). Thr77 serves as a coordination point for substrate. The residue at position 81 (Lys81) is an N6-acetyllysine. Residue Arg82 coordinates NADP(+). Residues 94-100 (SPNGTIR) and Arg109 each bind substrate. An N6-succinyllysine modification is found at Lys126. Substrate-binding residues include Arg132 and Lys212. N6-acetyllysine occurs at positions 224 and 233. Residue Asp252 coordinates Mn(2+). Lys260 is an NADP(+) binding site. Positions 275 and 279 each coordinate Mn(2+). 310–315 (GTVTRH) is a binding site for NADP(+). Lys321 carries the post-translational modification N6-acetyllysine. Asn328 serves as a coordination point for NADP(+). Ser389 carries the post-translational modification Phosphoserine. Lys400 carries the N6-succinyllysine modification.

It belongs to the isocitrate and isopropylmalate dehydrogenases family. Homodimer. The cofactor is Mg(2+). It depends on Mn(2+) as a cofactor. Acetylation at Lys-374 dramatically reduces catalytic activity.

The protein localises to the cytoplasm. It localises to the cytosol. It catalyses the reaction D-threo-isocitrate + NADP(+) = 2-oxoglutarate + CO2 + NADPH. Functionally, catalyzes the NADP(+)-dependent oxidative decarboxylation of isocitrate (D-threo-isocitrate) to 2-ketoglutarate (2-oxoglutarate), which is required by other enzymes such as the phytanoyl-CoA dioxygenase. Plays a critical role in the generation of NADPH, an important cofactor in many biosynthesis pathways. May act as a corneal epithelial crystallin and may be involved in maintaining corneal epithelial transparency. The protein is Isocitrate dehydrogenase [NADP] cytoplasmic (IDH1) of Ovis aries (Sheep).